The chain runs to 393 residues: Lipid-A-disaccharide synthase (393 aa).

Belongs to the LpxB family.

The catalysed reaction is a lipid X + a UDP-2-N,3-O-bis[(3R)-3-hydroxyacyl]-alpha-D-glucosamine = a lipid A disaccharide + UDP + H(+). Its pathway is bacterial outer membrane biogenesis; LPS lipid A biosynthesis. In terms of biological role, condensation of UDP-2,3-diacylglucosamine and 2,3-diacylglucosamine-1-phosphate to form lipid A disaccharide, a precursor of lipid A, a phosphorylated glycolipid that anchors the lipopolysaccharide to the outer membrane of the cell. The chain is Lipid-A-disaccharide synthase from Actinobacillus pleuropneumoniae serotype 5b (strain L20).